The following is a 284-amino-acid chain: Tropomyosin Per a 7.0101 (284 aa).

Residues 22–266 (ALLCEQQARD…EDELVHEKEK (245 aa)) adopt a coiled-coil conformation.

Belongs to the tropomyosin family. Homodimer.

Tropomyosin, in association with the troponin complex, plays a central role in the calcium dependent regulation of muscle contraction. The polypeptide is Tropomyosin Per a 7.0101 (Periplaneta americana (American cockroach)).